A 453-amino-acid polypeptide reads, in one-letter code: Probable exopolygalacturonase B (453 aa).

Positions 1-16 (MKFLALAALFASTVSS) are cleaved as a signal peptide. Residues Asn-185 and Asn-225 are each glycosylated (N-linked (GlcNAc...) asparagine). Asp-255 acts as the Proton donor in catalysis. An intrachain disulfide couples Cys-257 to Cys-274. N-linked (GlcNAc...) asparagine glycans are attached at residues Asn-263 and Asn-275. Residue His-278 is part of the active site. PbH1 repeat units lie at residues 295–316 (IENV…RLKA) and 327–348 (INNV…VLDQ). N-linked (GlcNAc...) asparagine glycosylation is found at Asn-302, Asn-329, Asn-354, and Asn-366. The PbH1 3 repeat unit spans residues 362–405 (PSRVNFTNIVFENIYGTSSGKHGKVVADLTCSPNAVCSGIRLKN). Cysteines 392 and 398 form a disulfide. Asn-436 is a glycosylation site (N-linked (GlcNAc...) asparagine).

It belongs to the glycosyl hydrolase 28 family.

It is found in the secreted. It catalyses the reaction [(1-&gt;4)-alpha-D-galacturonosyl](n) + H2O = alpha-D-galacturonate + [(1-&gt;4)-alpha-D-galacturonosyl](n-1). Functionally, specific in hydrolyzing the terminal glycosidic bond of polygalacturonic acid and oligogalacturonates. In Neosartorya fischeri (strain ATCC 1020 / DSM 3700 / CBS 544.65 / FGSC A1164 / JCM 1740 / NRRL 181 / WB 181) (Aspergillus fischerianus), this protein is Probable exopolygalacturonase B (pgxB).